The following is a 64-amino-acid chain: Large ribosomal subunit protein bL35 (64 aa).

Residues 20 to 42 are disordered; sequence GRVKREKMYGSHNLEKKNRKRTR. The segment covering 25–35 has biased composition (basic and acidic residues); the sequence is EKMYGSHNLEK.

The protein belongs to the bacterial ribosomal protein bL35 family.

The chain is Large ribosomal subunit protein bL35 from Chlorobium phaeobacteroides (strain BS1).